The following is an 86-amino-acid chain: Maxadilan (86 aa).

The first 23 residues, 1–23 (MKQILLISLVVVLAVFAFNVAEG), serve as a signal peptide directing secretion. 2 cysteine pairs are disulfide-bonded: C24/C28 and C37/C74.

As to quaternary structure, interacts with human ADCYAP1R1. In terms of tissue distribution, salivary gland (at protein level).

Its subcellular location is the secreted. In terms of biological role, potent vasodilator. Activates mammalian ADCYAP1R1, a PAC1 receptor, and induces cAMP accumulation in host cells. Causes the development of erythema following superficial injection into the rabbit or human skin. Influences adaptive immune responses mediated by host dendritic cells. Reduces surface expression of CD80 on host dendritic cells stimulated with lipopolysaccharides (LPS) and induces concomitant increase in CD86 expression on a subpopulation of these cells. Redirects cytokine secretion by LPS-activated host dendritic cells toward type 2 responses: decreases secretion of TNF-alpha/TNF, IL-12p40/IL12B and IFN-gamma/IFNG, and increases secretion of IL6 and IL10. Reduces ability of host bone marrow-derived dendritic cells to stimulate proliferation of CD4(+) T-cells. Reprograms the effect of LPS-activated host dendritic cells on cytokine secretion profiles in host T-cells: decreases secretion of TNF-alpha/TNF and IFN-gamma/IFNG, increases secretion of IL6 and IL13, and increases secretion of pro-inflammatory cytokine IL-1beta/IL1B in mixed lymphocyte reaction (MLR) cultures. Reduces LPS-induced up-regulation of CCR7 in activated host dendritic cells. Inhibits IFN-gamma/IFNG and IL-12p40/IL12B production by human peripheral blood mononuclear cells. Increases IL6 and decreases TNF-alpha/TNF production by LPS-stimulated human monocytes. Its function is as follows. (Microbial infection) Probably plays a critical role in the enhancement of Leishmania infectivity in the host attributed to sand fly saliva. This is Maxadilan from Lutzomyia longipalpis (Sand fly).